The following is a 337-amino-acid chain: Ribose-phosphate pyrophosphokinase 4 (337 aa).

Position 2 is an N-acetylserine (S2). The Mg(2+) site is built by D158 and H160. A binding of phosphoribosylpyrophosphate region spans residues 241–256 (GCHVVIVDDLVQSGGT).

This sequence belongs to the ribose-phosphate pyrophosphokinase family.

It carries out the reaction D-ribose 5-phosphate + ATP = 5-phospho-alpha-D-ribose 1-diphosphate + AMP + H(+). The chain is Ribose-phosphate pyrophosphokinase 4 (PRS4) from Arabidopsis thaliana (Mouse-ear cress).